The primary structure comprises 252 residues: Zinc finger protein 511 (252 aa).

3 consecutive C2H2-type zinc fingers follow at residues 80–105 (FACQ…HTLH), 107–130 (NVCS…LEWH), and 144–169 (YQCL…VRMH). The tract at residues 177-221 (FDKPKKSRSPASAEAPGDSGERSEGEAMEICSEPVAASPAPAGER) is disordered. Residue Arg240 is modified to Omega-N-methylarginine.

This sequence belongs to the krueppel C2H2-type zinc-finger protein family.

The protein resides in the nucleus. Functionally, may be involved in transcriptional regulation. The sequence is that of Zinc finger protein 511 from Homo sapiens (Human).